Consider the following 160-residue polypeptide: Cytochrome c-type biogenesis protein CcmE (160 aa).

Topologically, residues 1-7 (MTRKQRR) are cytoplasmic. The chain crosses the membrane as a helical; Signal-anchor for type II membrane protein span at residues 8 to 28 (LFMIFGALGTLGVAVGLILFA). Over 29 to 160 (LSDNIVFFYG…TQGAAAPLIR (132 aa)) the chain is Periplasmic. The heme site is built by His-122 and Tyr-126. The interval 140–160 (VWQEDGQAKPATQGAAAPLIR) is disordered.

It belongs to the CcmE/CycJ family.

It localises to the cell inner membrane. Heme chaperone required for the biogenesis of c-type cytochromes. Transiently binds heme delivered by CcmC and transfers the heme to apo-cytochromes in a process facilitated by CcmF and CcmH. The chain is Cytochrome c-type biogenesis protein CcmE from Beijerinckia indica subsp. indica (strain ATCC 9039 / DSM 1715 / NCIMB 8712).